The primary structure comprises 621 residues: 1-deoxy-D-xylulose-5-phosphate synthase (621 aa).

Residues His-80 and 121–123 contribute to the thiamine diphosphate site; that span reads GHS. Asp-152 serves as a coordination point for Mg(2+). Thiamine diphosphate contacts are provided by residues 153–154, Asn-181, Tyr-288, and Glu-371; that span reads GA. A Mg(2+)-binding site is contributed by Asn-181.

It belongs to the transketolase family. DXPS subfamily. In terms of assembly, homodimer. It depends on Mg(2+) as a cofactor. Thiamine diphosphate is required as a cofactor.

It catalyses the reaction D-glyceraldehyde 3-phosphate + pyruvate + H(+) = 1-deoxy-D-xylulose 5-phosphate + CO2. It participates in metabolic intermediate biosynthesis; 1-deoxy-D-xylulose 5-phosphate biosynthesis; 1-deoxy-D-xylulose 5-phosphate from D-glyceraldehyde 3-phosphate and pyruvate: step 1/1. In terms of biological role, catalyzes the acyloin condensation reaction between C atoms 2 and 3 of pyruvate and glyceraldehyde 3-phosphate to yield 1-deoxy-D-xylulose-5-phosphate (DXP). The chain is 1-deoxy-D-xylulose-5-phosphate synthase from Pectobacterium atrosepticum (strain SCRI 1043 / ATCC BAA-672) (Erwinia carotovora subsp. atroseptica).